Consider the following 99-residue polypeptide: Integration host factor subunit alpha (99 aa).

Positions phenylalanine 49–alanine 75 are disordered.

Belongs to the bacterial histone-like protein family. As to quaternary structure, heterodimer of an alpha and a beta chain.

Functionally, this protein is one of the two subunits of integration host factor, a specific DNA-binding protein that functions in genetic recombination as well as in transcriptional and translational control. The sequence is that of Integration host factor subunit alpha from Salmonella arizonae (strain ATCC BAA-731 / CDC346-86 / RSK2980).